Consider the following 344-residue polypeptide: Probable dual-specificity RNA methyltransferase RlmN (344 aa).

The active-site Proton acceptor is the glutamate 90. Positions 96-326 (YKYGNAICIS…VTIRRELGSS (231 aa)) constitute a Radical SAM core domain. An intrachain disulfide couples cysteine 103 to cysteine 331. Positions 110, 114, and 117 each coordinate [4Fe-4S] cluster. S-adenosyl-L-methionine is bound by residues 157 to 158 (GE), serine 189, 212 to 214 (SLH), and asparagine 288. Cysteine 331 serves as the catalytic S-methylcysteine intermediate.

Belongs to the radical SAM superfamily. RlmN family. [4Fe-4S] cluster serves as cofactor.

The protein resides in the cytoplasm. It catalyses the reaction adenosine(2503) in 23S rRNA + 2 reduced [2Fe-2S]-[ferredoxin] + 2 S-adenosyl-L-methionine = 2-methyladenosine(2503) in 23S rRNA + 5'-deoxyadenosine + L-methionine + 2 oxidized [2Fe-2S]-[ferredoxin] + S-adenosyl-L-homocysteine. It carries out the reaction adenosine(37) in tRNA + 2 reduced [2Fe-2S]-[ferredoxin] + 2 S-adenosyl-L-methionine = 2-methyladenosine(37) in tRNA + 5'-deoxyadenosine + L-methionine + 2 oxidized [2Fe-2S]-[ferredoxin] + S-adenosyl-L-homocysteine. Specifically methylates position 2 of adenine 2503 in 23S rRNA and position 2 of adenine 37 in tRNAs. The chain is Probable dual-specificity RNA methyltransferase RlmN from Caldicellulosiruptor saccharolyticus (strain ATCC 43494 / DSM 8903 / Tp8T 6331).